Consider the following 451-residue polypeptide: Proline--tRNA ligase (451 aa).

The protein belongs to the class-II aminoacyl-tRNA synthetase family. ProS type 2 subfamily. In terms of assembly, homodimer.

It localises to the cytoplasm. The catalysed reaction is tRNA(Pro) + L-proline + ATP = L-prolyl-tRNA(Pro) + AMP + diphosphate. Functionally, catalyzes the attachment of proline to tRNA(Pro) in a two-step reaction: proline is first activated by ATP to form Pro-AMP and then transferred to the acceptor end of tRNA(Pro). The sequence is that of Proline--tRNA ligase from Ruegeria sp. (strain TM1040) (Silicibacter sp.).